Consider the following 242-residue polypeptide: E3 ubiquitin-protein ligase AIRP2 (242 aa).

The segment at 146 to 184 (CGICLEIRNKVVLPTCNHSMCINCYRNWRARSQSCPFCR) adopts an RING-type zinc-finger fold.

Interacts with ATP1/SDIRIP1. Expressed in germinating seeds, flower organs and siliques.

It is found in the cytoplasm. Its subcellular location is the cytosol. It catalyses the reaction S-ubiquitinyl-[E2 ubiquitin-conjugating enzyme]-L-cysteine + [acceptor protein]-L-lysine = [E2 ubiquitin-conjugating enzyme]-L-cysteine + N(6)-ubiquitinyl-[acceptor protein]-L-lysine.. Its function is as follows. Possesses E3 ubiquitin-protein ligase activity in vitro when associated with the E2 enzyme UBC8 in vitro. Plays combinatory roles with AIRP1 in the positive regulation of the abscisic acid-mediated drought stress response. Plays a positive role in abscisic acid- and high salinity-regulated seed germination through the ubiquitin-proteasome-dependent down-regulation of ATP1/SDIRIP1. This Arabidopsis thaliana (Mouse-ear cress) protein is E3 ubiquitin-protein ligase AIRP2.